Consider the following 928-residue polypeptide: Nuclear pore complex-interacting protein family member B12 (928 aa).

A helical transmembrane segment spans residues 73–93 (VVITLWIVYLWVSLLKTIFWS). Disordered stretches follow at residues 242-452 (RMGH…NIKT) and 663-928 (ERLR…RRLS). Residues 252 to 263 (QQHSITDNSLSL) show a composition bias toward polar residues. The span at 349 to 359 (PLPPSAPPSAP) shows a compositional bias: pro residues. 4 stretches are compositionally biased toward basic and acidic residues: residues 406 to 416 (DNIKTPAERLR), 698 to 708 (DNIKTPAERLR), 740 to 750 (DNIKTPAERLR), and 782 to 792 (DNIKTPAERLR).

It belongs to the NPIP family.

It is found in the membrane. The chain is Nuclear pore complex-interacting protein family member B12 from Homo sapiens (Human).